We begin with the raw amino-acid sequence, 250 residues long: 1-(5-phosphoribosyl)-5-[(5-phosphoribosylamino)methylideneamino] imidazole-4-carboxamide isomerase (250 aa).

Residue D12 is the Proton acceptor of the active site. Catalysis depends on D134, which acts as the Proton donor.

Belongs to the HisA/HisF family.

The protein localises to the cytoplasm. It catalyses the reaction 1-(5-phospho-beta-D-ribosyl)-5-[(5-phospho-beta-D-ribosylamino)methylideneamino]imidazole-4-carboxamide = 5-[(5-phospho-1-deoxy-D-ribulos-1-ylimino)methylamino]-1-(5-phospho-beta-D-ribosyl)imidazole-4-carboxamide. The protein operates within amino-acid biosynthesis; L-histidine biosynthesis; L-histidine from 5-phospho-alpha-D-ribose 1-diphosphate: step 4/9. The protein is 1-(5-phosphoribosyl)-5-[(5-phosphoribosylamino)methylideneamino] imidazole-4-carboxamide isomerase of Actinobacillus pleuropneumoniae serotype 5b (strain L20).